The following is a 429-amino-acid chain: Asparagine--tRNA ligase (429 aa).

This sequence belongs to the class-II aminoacyl-tRNA synthetase family.

It localises to the cytoplasm. It carries out the reaction tRNA(Asn) + L-asparagine + ATP = L-asparaginyl-tRNA(Asn) + AMP + diphosphate + H(+). This is Asparagine--tRNA ligase from Thermoplasma acidophilum (strain ATCC 25905 / DSM 1728 / JCM 9062 / NBRC 15155 / AMRC-C165).